Here is a 292-residue protein sequence, read N- to C-terminus: MKKHSNNLDLFDQTEECLESNLRSCKIIVGDAREAVQGLDSEIFDCVVTSPPYWGLRDYGNGGQIGAEDNINDYIKDLVDLFRDVRRTLKDDGTLWLNIGDSYTSGGRTWRDKDDKNKGRAMSYRPPTPEGLKPKDLIGVPWRLAFALQNDGWYLRTDIIWNKPNCQPESVRDRPTRSHEYIFLLSKGKKYYYDWESIKEPASDPKMDKKNRRTVWNINTEPYPGSHFAVFPRAMARLCVLAGSRPGGKVLDPFFGSGTTGVVCQELDRECVGIELNEEYASLAKERILRRR.

The disordered stretch occupies residues 110-130 (WRDKDDKNKGRAMSYRPPTPE).

Belongs to the N(4)/N(6)-methyltransferase family. N(4) subfamily.

The enzyme catalyses a 2'-deoxycytidine in DNA + S-adenosyl-L-methionine = an N(4)-methyl-2'-deoxycytidine in DNA + S-adenosyl-L-homocysteine + H(+). Its function is as follows. A beta subtype methylase thatnrecognizes the double-stranded sequence 5'-CCCGGG-3', methylates C-2 on both strands, and protects the DNA from cleavage by the SmaI endonuclease. The polypeptide is Type II methyltransferase M.SmaI (smaIM) (Serratia marcescens).